The following is a 333-amino-acid chain: Serine/threonine-protein phosphatase 4 catalytic subunit 1 (333 aa).

The disordered stretch occupies residues 1–29 (MALAVADTQNETFARSESPTSGPSDQLST). A compositionally biased stretch (polar residues) spans 7–27 (DTQNETFARSESPTSGPSDQL). The Mn(2+) site is built by aspartate 79, histidine 81, aspartate 107, and asparagine 139. Catalysis depends on histidine 140, which acts as the Proton donor. Residues histidine 189 and histidine 264 each contribute to the Mn(2+) site. Leucine 333 carries the leucine methyl ester modification.

This sequence belongs to the PPP phosphatase family. PP-4 (PP-X) subfamily. Serine/threonine-protein phosphatase 4 (PP4) occurs in different assemblies of the catalytic and one or more regulatory subunits. The regulatory subunits are likely to be ppfr-1, ppfr-2, ppfr-4 and smk-1. Interacts with mei-1. Mn(2+) is required as a cofactor. Post-translationally, methylation at the C-terminal Leu-333 is critical for interactions with regulatory subunits.

The protein localises to the cytoplasm. Its subcellular location is the cytoskeleton. The protein resides in the microtubule organizing center. It localises to the centrosome. It catalyses the reaction O-phospho-L-seryl-[protein] + H2O = L-seryl-[protein] + phosphate. The catalysed reaction is O-phospho-L-threonyl-[protein] + H2O = L-threonyl-[protein] + phosphate. Functionally, protein phosphatase which plays an essential role in meiosis and in early embryonic mitosis. During spermatocyte meiosis and the first embryonic mitosis, regulates centrosome maturation, and thus spindle formation, by recruiting some of the components of the pericentriolar material (PCM). During oocyte meiosis I, regulates meiotic chromosome dynamics including synapsis-independent chromosome pairing, restriction of synapsis to homologous chromosomes, programmed DNA double-strand break initiation and crossover formation resulting in chiasma formation. During oocyte meiosis II and probably together with regulatory subunit ppfr-1, may regulate microtubule severing by dephosphorylating and activating mei-1, a component of the katanin microtubule severing complex. This Caenorhabditis briggsae protein is Serine/threonine-protein phosphatase 4 catalytic subunit 1 (pph-4.1).